A 308-amino-acid polypeptide reads, in one-letter code: Electron transfer flavoprotein subunit alpha (308 aa).

252–280 (LYVAVGISGAIQHLAGMKDSKVIVAINKD) provides a ligand contact to FAD.

It belongs to the ETF alpha-subunit/FixB family. As to quaternary structure, heterodimer of an alpha and a beta subunit. The cofactor is FAD.

Its function is as follows. The electron transfer flavoprotein serves as a specific electron acceptor for other dehydrogenases. It transfers the electrons to the main respiratory chain via ETF-ubiquinone oxidoreductase (ETF dehydrogenase). The protein is Electron transfer flavoprotein subunit alpha (etfA) of Paracoccus denitrificans.